The chain runs to 414 residues: Tyrosine--tRNA ligase (414 aa).

Tyr38 lines the L-tyrosine pocket. The 'HIGH' region motif lies at 43-52; sequence PTATSLHLGN. The L-tyrosine site is built by Tyr165 and Gln169. The short motif at 228–232 is the 'KMSKS' region element; it reads KFGKS. ATP is bound at residue Lys231. Residues 349–414 enclose the S4 RNA-binding domain; the sequence is FNANQIIDLG…KKYFFMIELI (66 aa).

It belongs to the class-I aminoacyl-tRNA synthetase family. TyrS type 1 subfamily. In terms of assembly, homodimer.

Its subcellular location is the cytoplasm. The enzyme catalyses tRNA(Tyr) + L-tyrosine + ATP = L-tyrosyl-tRNA(Tyr) + AMP + diphosphate + H(+). Functionally, catalyzes the attachment of tyrosine to tRNA(Tyr) in a two-step reaction: tyrosine is first activated by ATP to form Tyr-AMP and then transferred to the acceptor end of tRNA(Tyr). This is Tyrosine--tRNA ligase from Mesomycoplasma hyopneumoniae (strain 7448) (Mycoplasma hyopneumoniae).